The sequence spans 310 residues: Putative methyltransferase mtx subunit H (310 aa).

It belongs to the MtrH family. May be part of a complex composed of 3 subunits; MtxA, MtxH and MtxX.

The polypeptide is Putative methyltransferase mtx subunit H (mtxH) (Methanosarcina mazei (strain ATCC BAA-159 / DSM 3647 / Goe1 / Go1 / JCM 11833 / OCM 88) (Methanosarcina frisia)).